A 147-amino-acid polypeptide reads, in one-letter code: Large ribosomal subunit protein bL9 (147 aa).

It belongs to the bacterial ribosomal protein bL9 family.

In terms of biological role, binds to the 23S rRNA. This chain is Large ribosomal subunit protein bL9, found in Geobacter sp. (strain M21).